Reading from the N-terminus, the 450-residue chain is Crinkler effector protein 63 (450 aa).

Positions 1–17 (MVKLFCAIVGAAGSAFP) are cleaved as a signal peptide. An LQLFLAK domain region spans residues 18-55 (VDIDAGQSAGDLKDAIKAKNPATITCDAKDLQLSLAKT). The DWL domain stretch occupies residues 58 to 117 (GAWLPDDDQAALDLEDGKVHEDIQALIDGEKMKATWTIEDVLTANNMTKRKGRAPKSRQI). Asn103 carries an N-linked (GlcNAc...) asparagine glycan. Positions 118 to 124 (HVLVVVP) match the HVLVXXP motif motif. Positions 125–450 (EGAFGSASET…RSIPTFSYFS (326 aa)) are effector domain. Residues 218–224 (QRKRYRR) carry the Nuclear localization signal (NLS) motif. Asn342 is a glycosylation site (N-linked (GlcNAc...) asparagine).

The protein belongs to the Crinkler effector family. As to quaternary structure, forms a homodimer via an inverted association manner. Forms heterodimers with CRN79 and CRN115.

The protein localises to the secreted. It localises to the host nucleus. The protein resides in the host nucleoplasm. Functionally, secreted effector that, with CRN115, is critical to pathogenesis by modulating host defenses. Induces cell death in plant host cells. Suppresses callose deposition and affects expression of defense-related genes including two salicylic acid (SA) signal-induced and antimicrobial PR genes (PR1 and PR2), and genes involved in jasmonic acid (JA)/ethylene (ET)-mediated defense pathway (ERF1, ORA59, PDF1.2). CRN115 and CRN63 may share the same molecular host targets that are involved in the cell death signal transduction pathway and that their differential activities are dependent on plant nuclear localization or not. Does not affect MAPK activation and BIK1 phosphorylation and acts downstream of the MAPK cascades in PTI signaling. The chain is Crinkler effector protein 63 from Phytophthora sojae (strain P6497) (Soybean stem and root rot agent).